A 111-amino-acid polypeptide reads, in one-letter code: Dynein light chain Tctex-type (111 aa).

It belongs to the dynein light chain Tctex-type family. The cytoplasmic dynein complex consists of two catalytic heavy chains (HCs) and a number of non-catalytic subunits presented by intermediate chains (ICs), light intermediate chains (LICs) and light chains (LCs).

It localises to the cytoplasm. The protein resides in the cytoskeleton. Acts as one of several non-catalytic accessory components of the cytoplasmic dynein complex that are thought to be involved in linking dynein to cargos and to adapter proteins that regulate dynein function. Cytoplasmic dynein acts as a motor for the intracellular retrograde motility of vesicles and organelles along microtubules. Required for spermatid differentiation. Is not required for polarized transport in rhabdomere development and appears to be a non-essential component of the cytoplasmic dynein complex. This is Dynein light chain Tctex-type (Dlc90F) from Drosophila melanogaster (Fruit fly).